We begin with the raw amino-acid sequence, 406 residues long: Zinc finger protein 793 (406 aa).

The 72-residue stretch at 8–79 (VSFKDVVVGF…EAACPGCHCW (72 aa)) folds into the KRAB domain. C2H2-type zinc fingers lie at residues 227-249 (HVCS…QRSH), 255-277 (YGCT…QRIH), 283-305 (FECF…QRTH), 311-333 (FVCS…RKMH), 339-361 (YRCR…WRTH), and 367-389 (YGCN…QKIH).

This sequence belongs to the krueppel C2H2-type zinc-finger protein family.

The protein localises to the nucleus. Functionally, may be involved in transcriptional regulation. In Homo sapiens (Human), this protein is Zinc finger protein 793 (ZNF793).